We begin with the raw amino-acid sequence, 932 residues long: DNA mismatch repair protein MutS (932 aa).

The span at 1–13 shows a compositional bias: acidic residues; sequence MTTDTDTDVDAGT. Positions 1–26 are disordered; sequence MTTDTDTDVDAGTDLEPQPEGPPEKM. 648–655 is an ATP binding site; it reads GPNMSGKS. Residues 865–892 are disordered; sequence NQQNQASDDDEIARSPRGADTNTDAGIN.

It belongs to the DNA mismatch repair MutS family.

Its function is as follows. This protein is involved in the repair of mismatches in DNA. It is possible that it carries out the mismatch recognition step. This protein has a weak ATPase activity. In Haloquadratum walsbyi (strain DSM 16790 / HBSQ001), this protein is DNA mismatch repair protein MutS.